The primary structure comprises 814 residues: G-type lectin S-receptor-like serine/threonine-protein kinase At1g61370 (814 aa).

Positions 1–25 are cleaved as a signal peptide; it reads MGKIGIVFFASLLFLLIIFPSCAFA. The region spanning 26 to 145 is the Bulb-type lectin domain; sequence AITRASPLSI…VSERNLWESF (120 aa). Over 26 to 433 the chain is Extracellular; that stretch reads AITRASPLSI…SELAGSNRVK (408 aa). N-linked (GlcNAc...) asparagine glycans are attached at residues Asn43, Asn54, Asn89, Asn95, Asn253, and Asn271. In terms of domain architecture, EGF-like spans 282–318; sequence PVSSCDVYNTCGPFGLCIRSNPPKCECLKGFVPKSDE. Disulfide bonds link Cys286–Cys298 and Cys292–Cys306. N-linked (GlcNAc...) asparagine glycosylation is found at Asn324, Asn334, Asn340, and Asn383. The PAN domain occupies 337–423; sequence CDVNSSATAQ…GETLSIRLAS (87 aa). Intrachain disulfides connect Cys376/Cys397 and Cys380/Cys386. Residues 434-454 form a helical membrane-spanning segment; sequence IIVASIVSISVFMILVFASYW. Topologically, residues 455-814 are cytoplasmic; sequence YWRYKAKQND…NITQTAIVGR (360 aa). The Protein kinase domain maps to 501–786; sequence FSMENKLGQG…DLPKPKQPVF (286 aa). Residues 507 to 515 and Lys529 contribute to the ATP site; that span reads LGQGGFGPV. Phosphoserine is present on residues Ser535 and Ser550. Positions 590–607 are caM-binding; sequence TKKLELDWPKRFEIIQGI. Catalysis depends on Asp626, which acts as the Proton acceptor. Phosphoserine is present on residues Ser630 and Ser643. At Thr660 the chain carries Phosphothreonine. Phosphoserine is present on residues Ser703, Ser704, Ser797, and Ser802. Thr809 carries the phosphothreonine modification.

The protein belongs to the protein kinase superfamily. Ser/Thr protein kinase family.

The protein localises to the cell membrane. The catalysed reaction is L-seryl-[protein] + ATP = O-phospho-L-seryl-[protein] + ADP + H(+). It catalyses the reaction L-threonyl-[protein] + ATP = O-phospho-L-threonyl-[protein] + ADP + H(+). This Arabidopsis thaliana (Mouse-ear cress) protein is G-type lectin S-receptor-like serine/threonine-protein kinase At1g61370.